A 460-amino-acid polypeptide reads, in one-letter code: UDP-N-acetylmuramoylalanine--D-glutamate ligase (460 aa).

120-126 (GSNGKTT) is a binding site for ATP.

Belongs to the MurCDEF family.

The protein resides in the cytoplasm. The catalysed reaction is UDP-N-acetyl-alpha-D-muramoyl-L-alanine + D-glutamate + ATP = UDP-N-acetyl-alpha-D-muramoyl-L-alanyl-D-glutamate + ADP + phosphate + H(+). Its pathway is cell wall biogenesis; peptidoglycan biosynthesis. Functionally, cell wall formation. Catalyzes the addition of glutamate to the nucleotide precursor UDP-N-acetylmuramoyl-L-alanine (UMA). This Lactobacillus johnsonii (strain CNCM I-12250 / La1 / NCC 533) protein is UDP-N-acetylmuramoylalanine--D-glutamate ligase.